Reading from the N-terminus, the 234-residue chain is MMAEEGNRNKSTSTIEKPERRLMFKQLTRRVGVAVVGSIFGSALLRSRPAPAATVLRPPGALAEKDFQSACVRCGLCVEDCPFDILKLASWADPAPMGTPFFTARDEPCRMCQDIPCVRACPTGALNPLLTDIRKADMGVAVLVDHETCLNYKGLNCSICVRVCPIRGEAISLKPIQNERGLLQIPTVDSTKCTGCGTCEKHCVLSEAAIRVLPRELGLGVSGANSAGRTPVWK.

4Fe-4S ferredoxin-type domains lie at Ala61–Trp91, Gly98–Thr131, Val140–Ile176, and Gln184–Arg215. Residues Cys71, Cys74, Cys77, Cys81, Cys109, Cys112, Cys117, Cys121, Cys149, Cys157, Cys160, Cys164, Cys193, Cys196, Cys199, and Cys203 each coordinate [4Fe-4S] cluster.

Its pathway is one-carbon metabolism; methylamine degradation. In terms of biological role, involved in electron transfer. This is Methylamine utilization ferredoxin-type protein MauM (mauM) from Methylobacillus flagellatus (strain ATCC 51484 / DSM 6875 / VKM B-1610 / KT).